Consider the following 72-residue polypeptide: Translation initiation factor IF-1 (72 aa).

Positions 1-72 (MAKEEQIELE…TKGRITFRMK (72 aa)) constitute an S1-like domain.

This sequence belongs to the IF-1 family. As to quaternary structure, component of the 30S ribosomal translation pre-initiation complex which assembles on the 30S ribosome in the order IF-2 and IF-3, IF-1 and N-formylmethionyl-tRNA(fMet); mRNA recruitment can occur at any time during PIC assembly.

Its subcellular location is the cytoplasm. In terms of biological role, one of the essential components for the initiation of protein synthesis. Stabilizes the binding of IF-2 and IF-3 on the 30S subunit to which N-formylmethionyl-tRNA(fMet) subsequently binds. Helps modulate mRNA selection, yielding the 30S pre-initiation complex (PIC). Upon addition of the 50S ribosomal subunit IF-1, IF-2 and IF-3 are released leaving the mature 70S translation initiation complex. The polypeptide is Translation initiation factor IF-1 (Alcanivorax borkumensis (strain ATCC 700651 / DSM 11573 / NCIMB 13689 / SK2)).